The primary structure comprises 392 residues: ATP phosphoribosyltransferase regulatory subunit (392 aa).

This sequence belongs to the class-II aminoacyl-tRNA synthetase family. HisZ subfamily. Heteromultimer composed of HisG and HisZ subunits.

It localises to the cytoplasm. It functions in the pathway amino-acid biosynthesis; L-histidine biosynthesis; L-histidine from 5-phospho-alpha-D-ribose 1-diphosphate: step 1/9. Its function is as follows. Required for the first step of histidine biosynthesis. May allow the feedback regulation of ATP phosphoribosyltransferase activity by histidine. The chain is ATP phosphoribosyltransferase regulatory subunit from Prochlorococcus marinus (strain MIT 9313).